Consider the following 504-residue polypeptide: Prenylcysteine oxidase 1 (504 aa).

The signal sequence occupies residues 1 to 28 (MGRFAATLVGSLFGLGLLLCGLGRLASA). N-linked (GlcNAc...) asparagine glycosylation is found at asparagine 196, asparagine 322, and asparagine 352.

Belongs to the prenylcysteine oxidase family. It depends on FAD as a cofactor. As to expression, expressed mainly in cerebrum.

It localises to the lysosome. It catalyses the reaction an S-polyprenyl-L-cysteine + O2 + H2O = a polyprenal + L-cysteine + H2O2. The enzyme catalyses S-(2E,6E)-farnesyl-L-cysteine + O2 + H2O = (2E,6E)-farnesal + L-cysteine + H2O2. The catalysed reaction is [(2E,6E,10E)-geranylgeranyl]-L-cysteine + O2 + H2O = (2E,6E,10E)-geranylgeranial + L-cysteine + H2O2. In terms of biological role, prenylcysteine oxidase that cleaves the thioether bond of prenyl-L-cysteines, such as farnesylcysteine and geranylgeranylcysteine. Only active against free prenylcysteines and not prenylcysteine residues within prenylated proteins or peptides. Involved in the final step in the degradation of prenylated proteins, by degrading prenylcysteines after the protein has been degraded. This Rattus norvegicus (Rat) protein is Prenylcysteine oxidase 1.